The primary structure comprises 631 residues: Plastidic ATP/ADP-transporter (631 aa).

11 consecutive transmembrane segments (helical) span residues 106–126, 149–169, 180–200, 238–258, 271–290, 313–333, 369–389, 407–427, 442–462, 465–485, and 543–563; these read IELV…CILF, IIPF…MLLY, ALFY…GFVL, LFYV…FWGF, FYPL…GRTV, GMMS…WWVN, LATL…TWKS, DFST…QWIF, VLLL…PLAP, AKFG…QNIF, and LASS…AWLG. The tract at residues 586–631 is disordered; that stretch reads ERASLKIPVVSQNENGNGPLSSESSLNPAGGDSTNASSEPSSPRSL. The segment covering 595 to 631 has biased composition (polar residues); it reads VSQNENGNGPLSSESSLNPAGGDSTNASSEPSSPRSL.

This sequence belongs to the ADP/ATP translocase tlc (TC 2.A.12.2) family.

Its subcellular location is the plastid. It localises to the chloroplast membrane. In Solanum tuberosum (Potato), this protein is Plastidic ATP/ADP-transporter.